A 413-amino-acid chain; its full sequence is Divalent metal cation transporter MntH (413 aa).

The Cytoplasmic segment spans residues 1-19; the sequence is MTDNRVENSSGRAARKLRL. A helical transmembrane segment spans residues 20–39; it reads ALMGPAFIAAIGYIDPGNFA. The Periplasmic portion of the chain corresponds to 40–51; it reads TNIQAGASFGYQ. The helical transmembrane segment at 52–71 threads the bilayer; it reads LLWVVVWANLMAMLIQILSA. At 72 to 95 the chain is on the cytoplasmic side; sequence KLGIATGKNLAEQIRDHYPRPVVW. Residues 96-118 form a helical membrane-spanning segment; it reads FYWVQAEIIAMATDLAEFIGAAI. The Periplasmic portion of the chain corresponds to 119–125; that stretch reads GFKLILG. A helical transmembrane segment spans residues 126–145; the sequence is VSLLQGAVLTGIATFLILML. Topologically, residues 146–155 are cytoplasmic; the sequence is QRRGQKPLEK. A helical membrane pass occupies residues 156–175; the sequence is VIGGLLLFVAAAYIVELFFS. The Periplasmic portion of the chain corresponds to 176 to 196; the sequence is QPDMAQLGKGMVIPALPNPEA. The chain crosses the membrane as a helical span at residues 197 to 220; that stretch reads VFLAAGVLGATIMPHVIYLHSSLT. Residues 221 to 238 are Cytoplasmic-facing; that stretch reads QHLHGGTRQQRYSATKWD. A helical transmembrane segment spans residues 239 to 258; sequence VAIAMTIAGFVNLAMMATAA. The Periplasmic portion of the chain corresponds to 259 to 276; it reads AAFHFSGHTGIADLDQAY. A helical transmembrane segment spans residues 277 to 297; it reads LTLEPLLSHAAATVFGLSLVA. The Cytoplasmic portion of the chain corresponds to 298–327; it reads AGLSSTVVGTLAGQVVMQGFVRFHIPLWVR. Residues 328–344 traverse the membrane as a helical segment; the sequence is RTITMLPSFIVILMGLD. Over 345–350 the chain is Periplasmic; the sequence is PTRILV. The chain crosses the membrane as a helical span at residues 351–370; that stretch reads MSQVLLSFGIALALVPLLIF. The Cytoplasmic segment spans residues 371 to 387; the sequence is TSNATLMGELVNTRRVK. A helical transmembrane segment spans residues 388–406; it reads QIGWIIVVLVVALNIWLLV. Over 407–413 the chain is Periplasmic; it reads GTVMGLS.

Belongs to the NRAMP family.

The protein resides in the cell inner membrane. Its function is as follows. H(+)-stimulated, divalent metal cation uptake system. This is Divalent metal cation transporter MntH from Salmonella schwarzengrund (strain CVM19633).